A 341-amino-acid polypeptide reads, in one-letter code: S-adenosylmethionine:tRNA ribosyltransferase-isomerase (341 aa).

Belongs to the QueA family. Monomer.

The protein resides in the cytoplasm. It catalyses the reaction 7-aminomethyl-7-carbaguanosine(34) in tRNA + S-adenosyl-L-methionine = epoxyqueuosine(34) in tRNA + adenine + L-methionine + 2 H(+). It functions in the pathway tRNA modification; tRNA-queuosine biosynthesis. Functionally, transfers and isomerizes the ribose moiety from AdoMet to the 7-aminomethyl group of 7-deazaguanine (preQ1-tRNA) to give epoxyqueuosine (oQ-tRNA). The sequence is that of S-adenosylmethionine:tRNA ribosyltransferase-isomerase from Desulforamulus reducens (strain ATCC BAA-1160 / DSM 100696 / MI-1) (Desulfotomaculum reducens).